We begin with the raw amino-acid sequence, 173 residues long: Chromophore lyase CpcS/CpeS 3 (173 aa).

The protein belongs to the CpcS/CpeS biliprotein lyase family.

Covalently attaches a chromophore to Cys residue(s) of phycobiliproteins. The sequence is that of Chromophore lyase CpcS/CpeS 3 from Trichodesmium erythraeum (strain IMS101).